Consider the following 61-residue polypeptide: Large ribosomal subunit protein bL28 (61 aa).

The protein belongs to the bacterial ribosomal protein bL28 family.

The polypeptide is Large ribosomal subunit protein bL28 (Geobacillus thermodenitrificans (strain NG80-2)).